Reading from the N-terminus, the 443-residue chain is ATP-dependent protease ATPase subunit HslU (443 aa).

Residues Ile18, 60 to 65 (GVGKTE), Asp256, Glu321, and Arg393 each bind ATP.

This sequence belongs to the ClpX chaperone family. HslU subfamily. In terms of assembly, a double ring-shaped homohexamer of HslV is capped on each side by a ring-shaped HslU homohexamer. The assembly of the HslU/HslV complex is dependent on binding of ATP.

The protein resides in the cytoplasm. In terms of biological role, ATPase subunit of a proteasome-like degradation complex; this subunit has chaperone activity. The binding of ATP and its subsequent hydrolysis by HslU are essential for unfolding of protein substrates subsequently hydrolyzed by HslV. HslU recognizes the N-terminal part of its protein substrates and unfolds these before they are guided to HslV for hydrolysis. The chain is ATP-dependent protease ATPase subunit HslU from Salmonella typhi.